The chain runs to 285 residues: MRLIIVSGRSGSGKSTALDVLEDNGYYCIDNLPAGLLPELAERALIHTELAQPLVAVSIDARNLPSHLSRFPELLEDVRAKHIQCDVLYLDADEETLLKRFSETRRRHPLSNANRSLAEAIQDESALLGPIADLADLKINTTHLNLYQLRDTIKLRLLNQPEPGTAFLVESFGFKRGMPVDADLVFDVRCLPNPYWKPELRAQSGLDQPVAEYLAAQPEVEEMYQDIYTYLYKWLPRFAASNRAYVTIAIGCTGGHHRSVYLTERLGQALQKTLKNVQVRHRDLS.

8–15 (GRSGSGKS) lines the ATP pocket. 60-63 (DARN) contacts GTP.

The protein belongs to the RapZ-like family.

Displays ATPase and GTPase activities. This chain is Nucleotide-binding protein Pfl01_0854, found in Pseudomonas fluorescens (strain Pf0-1).